A 168-amino-acid chain; its full sequence is ATP synthase F(1) complex subunit delta, mitochondrial (168 aa).

The N-terminal 22 residues, 1–22 (MLPAALLRRPGLGRLVRHARAY), are a transit peptide targeting the mitochondrion. N6-acetyllysine; alternate is present on residues K136 and K165. Residues K136 and K165 each carry the N6-succinyllysine; alternate modification.

The protein belongs to the ATPase epsilon chain family. Component of the ATP synthase complex composed at least of ATP5F1A/subunit alpha, ATP5F1B/subunit beta, ATP5MC1/subunit c (homooctomer), MT-ATP6/subunit a, MT-ATP8/subunit 8, ATP5ME/subunit e, ATP5MF/subunit f, ATP5MG/subunit g, ATP5MK/subunit k, ATP5MJ/subunit j, ATP5F1C/subunit gamma, ATP5F1D/subunit delta, ATP5F1E/subunit epsilon, ATP5PF/subunit F6, ATP5PB/subunit b, ATP5PD/subunit d, ATP5PO/subunit OSCP. ATP synthase complex consists of a soluble F(1) head domain (subunits alpha(3) and beta(3)) - the catalytic core - and a membrane F(0) domain - the membrane proton channel (subunits c, a, 8, e, f, g, k and j). These two domains are linked by a central stalk (subunits gamma, delta, and epsilon) rotating inside the F1 region and a stationary peripheral stalk (subunits F6, b, d, and OSCP). Component of a complex composed at least by ATPIF1, ATP5F1A, ATP5F1B, ATP5F1C AND ATP5F1E.

It is found in the mitochondrion. The protein localises to the mitochondrion inner membrane. In terms of biological role, subunit delta, of the mitochondrial membrane ATP synthase complex (F(1)F(0) ATP synthase or Complex V) that produces ATP from ADP in the presence of a proton gradient across the membrane which is generated by electron transport complexes of the respiratory chain. ATP synthase complex consist of a soluble F(1) head domain - the catalytic core - and a membrane F(1) domain - the membrane proton channel. These two domains are linked by a central stalk rotating inside the F(1) region and a stationary peripheral stalk. During catalysis, ATP synthesis in the catalytic domain of F(1) is coupled via a rotary mechanism of the central stalk subunits to proton translocation. In vivo, can only synthesize ATP although its ATP hydrolase activity can be activated artificially in vitro. With the central stalk subunit gamma, is essential for the biogenesis of F(1) catalytic part of the ATP synthase complex namely in the formation of F1 assembly intermediate. This Homo sapiens (Human) protein is ATP synthase F(1) complex subunit delta, mitochondrial.